Reading from the N-terminus, the 82-residue chain is Cortexin-1 (82 aa).

The tract at residues 1 to 20 (MSAPWTLSPEPLPPSTGPPV) is disordered. A helical transmembrane segment spans residues 30-50 (TVFAFVLCLLVVLVLLMVRCV).

The protein belongs to the cortexin family. As to expression, neuron specific.

It is found in the membrane. Its function is as follows. May mediate extracellular or intracellular signaling of cortical neurons during forebrain development. The chain is Cortexin-1 (Ctxn1) from Rattus norvegicus (Rat).